Reading from the N-terminus, the 833-residue chain is Homeobox-leucine zipper protein ATHB-8 (833 aa).

The segment at residues 12 to 75 (DNGKYVRYTP…NRRCREKQRK (64 aa)) is a DNA-binding region (homeobox). Residues 70-108 (REKQRKEASRLQAVNRKLTAMNKLLMEENDRLQKQVSHL) adopt a coiled-coil conformation. An START domain is found at 150–378 (RDASPAGLLS…ISQEISQPNV (229 aa)).

The protein belongs to the HD-ZIP homeobox family. Class III subfamily. As to quaternary structure, interacts with ESR1 and ESR2. Interacts with ZPR3.

It is found in the nucleus. Functionally, probable transcription factor involved in the regulation of vascular development. May promote differentiation of precambial and cambial cells. The chain is Homeobox-leucine zipper protein ATHB-8 (ATHB-8) from Arabidopsis thaliana (Mouse-ear cress).